The chain runs to 786 residues: Endonuclease MutS2 (786 aa).

ATP is bound at residue 335 to 342 (GPNTGGKT). Positions 711–786 (LDLRGERFEN…GLGVTVVELK (76 aa)) constitute a Smr domain.

This sequence belongs to the DNA mismatch repair MutS family. MutS2 subfamily. Homodimer. Binds to stalled ribosomes, contacting rRNA.

Endonuclease that is involved in the suppression of homologous recombination and thus may have a key role in the control of bacterial genetic diversity. Functionally, acts as a ribosome collision sensor, splitting the ribosome into its 2 subunits. Detects stalled/collided 70S ribosomes which it binds and splits by an ATP-hydrolysis driven conformational change. Acts upstream of the ribosome quality control system (RQC), a ribosome-associated complex that mediates the extraction of incompletely synthesized nascent chains from stalled ribosomes and their subsequent degradation. Probably generates substrates for RQC. The chain is Endonuclease MutS2 from Bacillus cereus (strain AH820).